The sequence spans 105 residues: MPKKVLTGVVVSDKMQKTVTVLVERQFPHPLYGKVIKRSKKYLAHDPEEKYKLGDVVEIIESRPISKRKRFRVLRLVESGRMDLVEKYLIRRQNYESLSKRGGKA.

This sequence belongs to the universal ribosomal protein uS17 family. In terms of assembly, part of the 30S ribosomal subunit. Contacts protein S12.

One of the primary rRNA binding proteins, it binds directly to 16S rRNA where it helps nucleate assembly of the platform and body of the 30S subunit by bringing together and stabilizing interactions between several different RNA helices. The combined cluster of proteins S8, S12 and S17 appears to hold together the shoulder and platform of the 30S subunit. The protein is Small ribosomal subunit protein uS17 of Thermus thermophilus (strain ATCC 27634 / DSM 579 / HB8).